The chain runs to 169 residues: Biogenesis of lysosome-related organelles complex 1 subunit 4 (169 aa).

The protein belongs to the BLOC1S4 family. As to quaternary structure, component of the biogenesis of lysosome-related organelles complex-1 (BLOC-1) composed of Blos1, Blos2, Blos3, Blos4, Dysb, Muted, Pldn and Snapin. Interacts with Pldn.

Component of the biogenesis of lysosome-related organelles complex-1 (BLOC-1) involved in pigment granule biogenesis. In Drosophila melanogaster (Fruit fly), this protein is Biogenesis of lysosome-related organelles complex 1 subunit 4.